Reading from the N-terminus, the 427-residue chain is 5-hydroxybenzimidazole synthase BzaA (427 aa).

It belongs to the ThiC family. 5-hydroxybenzimidazole synthase subfamily. It depends on [4Fe-4S] cluster as a cofactor.

It catalyses the reaction 5-amino-1-(5-phospho-beta-D-ribosyl)imidazole + AH2 + S-adenosyl-L-methionine = 5-hydroxybenzimidazole + 5'-deoxyadenosine + formate + L-methionine + A + NH4(+) + phosphate + 2 H(+). Its pathway is cofactor biosynthesis; adenosylcobalamin biosynthesis. In terms of biological role, together with BzaB, catalyzes the conversion of aminoimidazole ribotide (AIR) to 5-hydroxybenzimidazole (5-HBI) in a radical S-adenosyl-L-methionine (SAM)-dependent reaction. Is thus involved in the anaerobic biosynthesis of dimethylbenzimidazole (DMB), the lower axial ligand of vitamin B12 (cobalamin). Requires BzaB for catalytic activity, as BzaA alone displays no activity. The chain is 5-hydroxybenzimidazole synthase BzaA from Eubacterium limosum.